Here is a 141-residue protein sequence, read N- to C-terminus: MKENDVVLRTVTKLVVFILLTFGFYVFFAGHNNPGGGFIGGLIFSSAFILMFLAFNVEEVLESLPIDFRILMIIGALVSSITAIIPMFFGKPFLSQYETTWILPILGQIHVSTITLFELGILFSVVGVIVTVMLSLSGGRS.

4 helical membrane passes run 10 to 30 (TVTK…FFAG), 35 to 55 (GGGF…FLAF), 70 to 90 (ILMI…MFFG), and 114 to 134 (ITLF…TVML).

The protein belongs to the CPA3 antiporters (TC 2.A.63) subunit B family. May form a heterooligomeric complex that consists of seven subunits: mnhA2, mnhB2, mnhC2, mnhD2, mnhE2, mnhF2 and mnhG2.

The protein localises to the cell membrane. The chain is Putative antiporter subunit mnhB2 (mnhB2) from Staphylococcus aureus (strain Mu3 / ATCC 700698).